Here is a 196-residue protein sequence, read N- to C-terminus: UPF0056 membrane protein BU449 (196 aa).

Helical transmembrane passes span 8–28, 45–65, 71–91, 105–125, 134–154, and 174–194; these read TILL…MTIL, IIAL…LIIL, TVSI…IFPS, FLVP…TLML, MFYL…ILLS, and MGLV…RAWF.

This sequence belongs to the UPF0056 (MarC) family.

It is found in the cell membrane. The chain is UPF0056 membrane protein BU449 from Buchnera aphidicola subsp. Acyrthosiphon pisum (strain APS) (Acyrthosiphon pisum symbiotic bacterium).